A 452-amino-acid polypeptide reads, in one-letter code: Enolase (452 aa).

Q167 is a (2R)-2-phosphoglycerate binding site. E209 serves as the catalytic Proton donor. Residues D250, E307, and D334 each coordinate Mg(2+). Residues K359, R388, S389, and K410 each contribute to the (2R)-2-phosphoglycerate site. Residue K359 is the Proton acceptor of the active site.

Belongs to the enolase family. Requires Mg(2+) as cofactor.

It is found in the cytoplasm. It localises to the secreted. The protein localises to the cell surface. The catalysed reaction is (2R)-2-phosphoglycerate = phosphoenolpyruvate + H2O. Its pathway is carbohydrate degradation; glycolysis; pyruvate from D-glyceraldehyde 3-phosphate: step 4/5. Functionally, catalyzes the reversible conversion of 2-phosphoglycerate (2-PG) into phosphoenolpyruvate (PEP). It is essential for the degradation of carbohydrates via glycolysis. This is Enolase from Mesomycoplasma hyopneumoniae (strain 7448) (Mycoplasma hyopneumoniae).